Here is a 185-residue protein sequence, read N- to C-terminus: Ribosome-recycling factor (185 aa).

The tract at residues 143–163 (RKDGEAGEDEVARAEKDLDKS) is disordered.

This sequence belongs to the RRF family.

It is found in the cytoplasm. In terms of biological role, responsible for the release of ribosomes from messenger RNA at the termination of protein biosynthesis. May increase the efficiency of translation by recycling ribosomes from one round of translation to another. This chain is Ribosome-recycling factor, found in Mycobacterium ulcerans (strain Agy99).